The chain runs to 245 residues: 1-(5-phosphoribosyl)-5-[(5-phosphoribosylamino)methylideneamino] imidazole-4-carboxamide isomerase (245 aa).

D10 functions as the Proton acceptor in the catalytic mechanism. Catalysis depends on D129, which acts as the Proton donor.

The protein belongs to the HisA/HisF family.

It is found in the cytoplasm. The enzyme catalyses 1-(5-phospho-beta-D-ribosyl)-5-[(5-phospho-beta-D-ribosylamino)methylideneamino]imidazole-4-carboxamide = 5-[(5-phospho-1-deoxy-D-ribulos-1-ylimino)methylamino]-1-(5-phospho-beta-D-ribosyl)imidazole-4-carboxamide. Its pathway is amino-acid biosynthesis; L-histidine biosynthesis; L-histidine from 5-phospho-alpha-D-ribose 1-diphosphate: step 4/9. This is 1-(5-phosphoribosyl)-5-[(5-phosphoribosylamino)methylideneamino] imidazole-4-carboxamide isomerase from Parafrankia sp. (strain EAN1pec).